A 175-amino-acid chain; its full sequence is MATALVLGYSAFDLGLFSDKDPRLKLIKKAIRKDLEAMAADGVSWLVFTGSLGFEYWVLEVAQEMKTEYGFQLATIFAFETHGENWNEDNQMKLSRFKQVDFVKYAYPRYEHKGQLRDYQQFLLENTNSSYLFYDEENETKLAYFYQKMKNQEDYFIKRLTFDQLNELAENFSEN.

The protein belongs to the UPF0398 family.

The polypeptide is UPF0398 protein SPH_0478 (Streptococcus pneumoniae (strain Hungary19A-6)).